Here is a 70-residue protein sequence, read N- to C-terminus: Large ribosomal subunit protein bL31 (70 aa).

4 residues coordinate Zn(2+): C16, C18, C37, and C40.

It belongs to the bacterial ribosomal protein bL31 family. Type A subfamily. In terms of assembly, part of the 50S ribosomal subunit. The cofactor is Zn(2+).

In terms of biological role, binds the 23S rRNA. This Ectopseudomonas mendocina (strain ymp) (Pseudomonas mendocina) protein is Large ribosomal subunit protein bL31.